A 197-amino-acid chain; its full sequence is uncharacterized protein (197 aa).

Residues 150–172 traverse the membrane as a helical segment; it reads SLKLNTTLPMFALNLICLLRSIL.

The protein localises to the membrane. This is an uncharacterized protein from Saccharomyces cerevisiae (strain ATCC 204508 / S288c) (Baker's yeast).